The sequence spans 356 residues: Decorin (356 aa).

A signal peptide spans 1 to 15 (MRLVLFILLLPVCLA). Residues 16 to 29 (TPFHQKGLFDFMLE) constitute a propeptide that is removed on maturation. A glycan (O-linked (Xyl...) (glycosaminoglycan) serine) is linked at S45. Cystine bridges form between C51/C57 and C55/C64. 12 LRR repeats span residues 70–90 (ERVP…NNKI), 91–114 (TEIR…NNKI), 115–138 (SKIS…KNNL), 139–159 (KELP…ENEI), 160–183 (SKLR…TNPL), 184–209 (KSSG…DTNI), 210–230 (TSIP…GNKI), 231–254 (SKID…FNSI), 255–278 (SSVE…NNEL), 279–301 (VRVP…NNKI), 302–331 (ASIG…SNPV), and 332–356 (QYWE…GNYK). Residue N208 is glycosylated (N-linked (GlcNAc...) asparagine). N-linked (GlcNAc...) asparagine glycosylation is present at N259. A disulfide bridge connects residues C310 and C343.

The protein belongs to the small leucine-rich proteoglycan (SLRP) family. SLRP class I subfamily. In terms of assembly, binds to type I and type II collagen, to fibronectin and TGF-beta. Forms a ternary complex with MFAP2 and ELN. The attached glycosaminoglycan chain can be either chondroitin sulfate or dermatan sulfate depending upon the tissue of origin.

It is found in the secreted. It localises to the extracellular space. The protein localises to the extracellular matrix. May affect the rate of fibrils formation. The polypeptide is Decorin (DCN) (Coturnix japonica (Japanese quail)).